Here is a 591-residue protein sequence, read N- to C-terminus: NADH-quinone oxidoreductase subunit C/D (591 aa).

Residues 1–182 (MVTVVENIDP…TPYFLNTAKQ (182 aa)) are NADH dehydrogenase I subunit C. The NADH dehydrogenase I subunit D stretch occupies residues 206–591 (DFMFLNIGPN…IDVVMADCDR (386 aa)).

This sequence in the N-terminal section; belongs to the complex I 30 kDa subunit family. It in the C-terminal section; belongs to the complex I 49 kDa subunit family. As to quaternary structure, NDH-1 is composed of 13 different subunits. Subunits NuoB, CD, E, F, and G constitute the peripheral sector of the complex.

Its subcellular location is the cell inner membrane. The enzyme catalyses a quinone + NADH + 5 H(+)(in) = a quinol + NAD(+) + 4 H(+)(out). Functionally, NDH-1 shuttles electrons from NADH, via FMN and iron-sulfur (Fe-S) centers, to quinones in the respiratory chain. The immediate electron acceptor for the enzyme in this species is believed to be ubiquinone. Couples the redox reaction to proton translocation (for every two electrons transferred, four hydrogen ions are translocated across the cytoplasmic membrane), and thus conserves the redox energy in a proton gradient. This chain is NADH-quinone oxidoreductase subunit C/D, found in Psychrobacter arcticus (strain DSM 17307 / VKM B-2377 / 273-4).